Consider the following 139-residue polypeptide: Ribonuclease P protein component (139 aa).

Residues 120 to 139 (KATTGGECTPKSEKCVTAPR) are disordered.

It belongs to the RnpA family. In terms of assembly, consists of a catalytic RNA component (M1 or rnpB) and a protein subunit.

The catalysed reaction is Endonucleolytic cleavage of RNA, removing 5'-extranucleotides from tRNA precursor.. Functionally, RNaseP catalyzes the removal of the 5'-leader sequence from pre-tRNA to produce the mature 5'-terminus. It can also cleave other RNA substrates such as 4.5S RNA. The protein component plays an auxiliary but essential role in vivo by binding to the 5'-leader sequence and broadening the substrate specificity of the ribozyme. The polypeptide is Ribonuclease P protein component (Chlamydia pneumoniae (Chlamydophila pneumoniae)).